The following is a 65-amino-acid chain: Large ribosomal subunit protein bL33 (65 aa).

The interval Ala20–Thr42 is disordered.

This sequence belongs to the bacterial ribosomal protein bL33 family.

The protein is Large ribosomal subunit protein bL33 of Prochlorococcus marinus (strain SARG / CCMP1375 / SS120).